A 328-amino-acid chain; its full sequence is Delta(3,5)-Delta(2,4)-dienoyl-CoA isomerase, mitochondrial (328 aa).

The transit peptide at 1–33 (MAAGIVASRRLRDLLTRRLTGSNYPGLSISLRL) directs the protein to the mitochondrion. Substrate is bound by residues 116-120 (AGIDL) and Gly174. N6-succinyllysine is present on Lys231. Residue Ser268 is modified to Phosphoserine. The Microbody targeting signal signature appears at 326–328 (SKL). Lys327 bears the N6-acetyllysine mark.

This sequence belongs to the enoyl-CoA hydratase/isomerase family. As to quaternary structure, homohexamer.

Its subcellular location is the mitochondrion. The protein localises to the peroxisome. It carries out the reaction (3E,5Z)-octadienoyl-CoA = (2E,4E)-octadienoyl-CoA. The enzyme catalyses (3E,5Z,8Z,11Z,14Z)-eicosapentaenoyl-CoA = (2E,4E,8Z,11Z,14Z)-eicosapentaenoyl-CoA. It functions in the pathway lipid metabolism; fatty acid beta-oxidation. Its function is as follows. Isomerization of 3-trans,5-cis-dienoyl-CoA to 2-trans,4-trans-dienoyl-CoA. The polypeptide is Delta(3,5)-Delta(2,4)-dienoyl-CoA isomerase, mitochondrial (Homo sapiens (Human)).